The chain runs to 126 residues: Protein ApaG (126 aa).

One can recognise an ApaG domain in the interval 2 to 126; the sequence is RRKPYELKVE…FSLAIPRRLH (125 aa).

This is Protein ApaG from Methylococcus capsulatus (strain ATCC 33009 / NCIMB 11132 / Bath).